The chain runs to 89 residues: Small ribosomal subunit protein uS15 (89 aa).

Belongs to the universal ribosomal protein uS15 family. In terms of assembly, part of the 30S ribosomal subunit. Forms a bridge to the 50S subunit in the 70S ribosome, contacting the 23S rRNA.

Functionally, one of the primary rRNA binding proteins, it binds directly to 16S rRNA where it helps nucleate assembly of the platform of the 30S subunit by binding and bridging several RNA helices of the 16S rRNA. Forms an intersubunit bridge (bridge B4) with the 23S rRNA of the 50S subunit in the ribosome. This chain is Small ribosomal subunit protein uS15, found in Aliivibrio fischeri (strain ATCC 700601 / ES114) (Vibrio fischeri).